The sequence spans 308 residues: Phosphoribosylaminoimidazole-succinocarboxamide synthase (308 aa).

It belongs to the SAICAR synthetase family.

The enzyme catalyses 5-amino-1-(5-phospho-D-ribosyl)imidazole-4-carboxylate + L-aspartate + ATP = (2S)-2-[5-amino-1-(5-phospho-beta-D-ribosyl)imidazole-4-carboxamido]succinate + ADP + phosphate + 2 H(+). It participates in purine metabolism; IMP biosynthesis via de novo pathway; 5-amino-1-(5-phospho-D-ribosyl)imidazole-4-carboxamide from 5-amino-1-(5-phospho-D-ribosyl)imidazole-4-carboxylate: step 1/2. This chain is Phosphoribosylaminoimidazole-succinocarboxamide synthase, found in Xylella fastidiosa (strain Temecula1 / ATCC 700964).